Consider the following 69-residue polypeptide: Large ribosomal subunit protein bL28 (69 aa).

Positions 1-27 are disordered; the sequence is MSRRCSVSGKGPLVGNNVSHANNKTKR.

This sequence belongs to the bacterial ribosomal protein bL28 family.

The chain is Large ribosomal subunit protein bL28 from Sulfurovum sp. (strain NBC37-1).